Reading from the N-terminus, the 105-residue chain is Heat shock protein HspQ (105 aa).

Belongs to the HspQ family.

The protein resides in the cytoplasm. In terms of biological role, involved in the degradation of certain denaturated proteins, including DnaA, during heat shock stress. This is Heat shock protein HspQ from Sodalis glossinidius (strain morsitans).